The sequence spans 109 residues: Parvalbumin beta (109 aa).

Ala-2 carries the post-translational modification N-acetylalanine. 2 EF-hand domains span residues 39 to 74 and 78 to 109; these read KSAD…FKAG and LSDA…MIKG. 11 residues coordinate Ca(2+): Asp-52, Asp-54, Ser-56, Tyr-58, Glu-60, Glu-63, Asp-91, Asp-93, Asp-95, Lys-97, and Glu-102.

This sequence belongs to the parvalbumin family. The N-terminus is blocked.

Functionally, in muscle, parvalbumin is thought to be involved in relaxation after contraction. It binds two calcium ions. This Scomber scombrus (Atlantic mackerel) protein is Parvalbumin beta.